Here is a 1098-residue protein sequence, read N- to C-terminus: Eukaryotic translation initiation factor 3 subunit A (1098 aa).

One can recognise a PCI domain in the interval 324–503; that stretch reads AQEQATRVLL…DCVRFGSSDA (180 aa). Positions 574 to 844 form a coiled coil; the sequence is TEIERIHRRK…ARQAVIDSQR (271 aa). 2 disordered regions span residues 599 to 648 and 805 to 1098; these read EKAA…KIKR and RAEK…NWRR. Composition is skewed to basic and acidic residues over residues 608-648, 805-857, and 877-895; these read QAKR…KIKR, RAEK…REME, and MPQREPRPMRDGPPREPFR. The segment covering 905 to 914 has biased composition (polar residues); sequence DSSWRSSAQP. Basic and acidic residues-rich tracts occupy residues 916 to 978 and 1054 to 1079; these read RKPD…ERGA and LPPRDLPPRDGPRDIPRRDGPRRDGP. The segment covering 1080–1098 has biased composition (low complexity); the sequence is NRNSGANNAGNADSANWRR.

It belongs to the eIF-3 subunit A family. As to quaternary structure, component of the eukaryotic translation initiation factor 3 (eIF-3) complex.

The protein resides in the cytoplasm. Functionally, RNA-binding component of the eukaryotic translation initiation factor 3 (eIF-3) complex, which is involved in protein synthesis of a specialized repertoire of mRNAs and, together with other initiation factors, stimulates binding of mRNA and methionyl-tRNAi to the 40S ribosome. The eIF-3 complex specifically targets and initiates translation of a subset of mRNAs involved in cell proliferation. The polypeptide is Eukaryotic translation initiation factor 3 subunit A (Caenorhabditis briggsae).